The primary structure comprises 106 residues: ATP-dependent Clp protease adapter protein ClpS (106 aa).

This sequence belongs to the ClpS family. Binds to the N-terminal domain of the chaperone ClpA.

Functionally, involved in the modulation of the specificity of the ClpAP-mediated ATP-dependent protein degradation. This chain is ATP-dependent Clp protease adapter protein ClpS, found in Salmonella gallinarum (strain 287/91 / NCTC 13346).